The sequence spans 421 residues: MSPKRIAKRRSPPADAIPKSKKVKVSHRSHSTEPGLVLTLGQGDVGQLGLGENVMERKKPALVSIPEDVVQAEAGGMHTVCLSKSGQVYSFGCNDEGALGRDTSVEGSEMVPGKVELQEKVVQVSAGDSHTAALTDDGRVFLWGSFRDNNGVIGLLEPMKKSMVPVQVQLDVPVVKVASGNDHLVMLTADGDLYTLGCGEQGQLGRVPELFANRGGRQGLERLLVPKCVMLKSRGSRGHVRFQDAFCGAYFTFAISHEGHVYGFGLSNYHQLGTPGTESCFIPQNLTSFKNSTKSWVGFSGGQHHTVCMDSEGKAYSLGRAEYGRLGLGEGAEEKSIPTLISRLPAVSSVACGASVGYAVTKDGRVFAWGMGTNYQLGTGQDEDAWSPVEMMGKQLENRVVLSVSSGGQHTVLLVKDKEQS.

Basic residues-rich tracts occupy residues M1–S11 and K19–S29. The tract at residues M1–L36 is disordered. A N,N,N-trimethylserine; alternate modification is found at S2. S2 bears the N,N-dimethylserine; alternate mark. S2 is subject to N-methylserine; alternate. Phosphoserine occurs at positions 2 and 11. Residues K4 to K24 carry the Bipartite nuclear localization signal motif. 7 RCC1 repeats span residues P34–K84, S85–D136, G138–A189, G191–H257, E258–S311, E312–K362, and D363–K416.

As to quaternary structure, interacts with RAN. Interacts with KPNA3. Interacts (via N-terminus and RCC1 repeats) with KPNA4. Interacts with ARRB2; the interaction is detected in the nucleus upon OR1D2 stimulation. In terms of processing, N-terminal methylation by METTL11A/NTM1 is required for binding double-stranded DNA and stable chromatin association. Di- and trimethylation produce a permanent positive charge on the amino group, which facilitates electrostatic binding to the phosphate groups on DNA, while inhibiting histone-binding. Methylated tail helps retain RCC1 on chromosomes during nucleotide exchange on Ran.

It is found in the nucleus. Its subcellular location is the chromosome. It localises to the cytoplasm. Guanine-nucleotide releasing factor that promotes the exchange of Ran-bound GDP by GTP, and thereby plays an important role in RAN-mediated functions in nuclear import and mitosis. Contributes to the generation of high levels of chromosome-associated, GTP-bound RAN, which is important for mitotic spindle assembly and normal progress through mitosis. Via its role in maintaining high levels of GTP-bound RAN in the nucleus, contributes to the release of cargo proteins from importins after nuclear import. Involved in the regulation of onset of chromosome condensation in the S phase. Binds both to the nucleosomes and double-stranded DNA. The polypeptide is Regulator of chromosome condensation (RCC1) (Homo sapiens (Human)).